A 350-amino-acid chain; its full sequence is Purine-binding protein BAB2_0673 (350 aa).

An N-terminal signal peptide occupies residues 1-17; the sequence is MVIATVAGFMLGGAAHA. Positions 36, 185, and 211 each coordinate adenine.

The protein belongs to the BMP lipoprotein family.

In terms of biological role, binds adenine and probably also other purines, such as guanine. May play a role in adenine and guanine uptake. May be part of an ABC-type uptake system for adenine and similar ligands. This chain is Purine-binding protein BAB2_0673, found in Brucella abortus (strain 2308).